Consider the following 601-residue polypeptide: Elongation factor 4 (601 aa).

A tr-type G domain is found at 5–187; the sequence is DKIRNFSIIA…SIVKDLPAPQ (183 aa). Residues 17-22 and 134-137 each bind GTP; these read DHGKST and NKVD.

It belongs to the TRAFAC class translation factor GTPase superfamily. Classic translation factor GTPase family. LepA subfamily.

It localises to the cell inner membrane. It carries out the reaction GTP + H2O = GDP + phosphate + H(+). Functionally, required for accurate and efficient protein synthesis under certain stress conditions. May act as a fidelity factor of the translation reaction, by catalyzing a one-codon backward translocation of tRNAs on improperly translocated ribosomes. Back-translocation proceeds from a post-translocation (POST) complex to a pre-translocation (PRE) complex, thus giving elongation factor G a second chance to translocate the tRNAs correctly. Binds to ribosomes in a GTP-dependent manner. The sequence is that of Elongation factor 4 from Maridesulfovibrio salexigens (strain ATCC 14822 / DSM 2638 / NCIMB 8403 / VKM B-1763) (Desulfovibrio salexigens).